Here is a 343-residue protein sequence, read N- to C-terminus: Probable 3',5'-cyclic-nucleotide phosphodiesterase (343 aa).

Positions 1-36 (MKYLSIKSASDKIKSGLLKTGVILSFSLFSSLSTAA) are cleaved as a signal peptide.

This sequence belongs to the cyclic nucleotide phosphodiesterase class-II family.

The protein localises to the periplasm. The enzyme catalyses a nucleoside 3',5'-cyclic phosphate + H2O = a nucleoside 5'-phosphate + H(+). This chain is Probable 3',5'-cyclic-nucleotide phosphodiesterase (cpdP), found in Yersinia pestis.